Reading from the N-terminus, the 323-residue chain is Fructose-1,6-bisphosphatase class 1 (323 aa).

Residues Glu88, Asp107, Leu109, and Asp110 each contribute to the Mg(2+) site. Substrate is bound by residues 110 to 113 (DGSS) and Asn200. Residue Glu272 coordinates Mg(2+).

The protein belongs to the FBPase class 1 family. In terms of assembly, homotetramer. Requires Mg(2+) as cofactor.

Its subcellular location is the cytoplasm. It carries out the reaction beta-D-fructose 1,6-bisphosphate + H2O = beta-D-fructose 6-phosphate + phosphate. It functions in the pathway carbohydrate biosynthesis; gluconeogenesis. The protein is Fructose-1,6-bisphosphatase class 1 of Acinetobacter baumannii (strain AYE).